Consider the following 155-residue polypeptide: Ribonuclease H (155 aa).

Residues 1–146 form the RNase H type-1 domain; that stretch reads MPELFAYTDG…ADELARAGMK (146 aa). Mg(2+) is bound by residues Asp-9, Glu-52, Asp-74, and Asp-138.

This sequence belongs to the RNase H family. In terms of assembly, monomer. The cofactor is Mg(2+).

The protein localises to the cytoplasm. It catalyses the reaction Endonucleolytic cleavage to 5'-phosphomonoester.. In terms of biological role, endonuclease that specifically degrades the RNA of RNA-DNA hybrids. This is Ribonuclease H from Ruegeria pomeroyi (strain ATCC 700808 / DSM 15171 / DSS-3) (Silicibacter pomeroyi).